The sequence spans 894 residues: Translation initiation factor IF-2 (894 aa).

The tract at residues 47–305 is disordered; that stretch reads AHLNRENGSG…GSALQQSFQK (259 aa). Residues 68-82 are compositionally biased toward polar residues; that stretch reads STLNIPGTGGKSKSV. Basic and acidic residues-rich tracts occupy residues 93–159 and 166–219; these read VKRD…KDKV and DMTK…KWTD. A compositionally biased stretch (basic residues) spans 254 to 269; it reads GRSRNAKAARPAKKGN. Residues 270 to 283 are compositionally biased toward basic and acidic residues; that stretch reads KHSESKADREEARA. A tr-type G domain is found at 393–562; the sequence is PRAPVVTIMG…LLQAEVLELK (170 aa). Residues 402 to 409 are G1; it reads GHVDHGKT. Position 402–409 (402–409) interacts with GTP; sequence GHVDHGKT. Residues 427–431 are G2; that stretch reads GITQH. A G3 region spans residues 448–451; the sequence is DTPG. GTP contacts are provided by residues 448-452 and 502-505; these read DTPGH and NKID. The interval 502 to 505 is G4; sequence NKID. The tract at residues 538 to 540 is G5; sequence SAK.

This sequence belongs to the TRAFAC class translation factor GTPase superfamily. Classic translation factor GTPase family. IF-2 subfamily.

Its subcellular location is the cytoplasm. Functionally, one of the essential components for the initiation of protein synthesis. Protects formylmethionyl-tRNA from spontaneous hydrolysis and promotes its binding to the 30S ribosomal subunits. Also involved in the hydrolysis of GTP during the formation of the 70S ribosomal complex. The sequence is that of Translation initiation factor IF-2 from Citrobacter koseri (strain ATCC BAA-895 / CDC 4225-83 / SGSC4696).